The primary structure comprises 295 residues: Pyrroline-5-carboxylate reductase (295 aa).

This sequence belongs to the pyrroline-5-carboxylate reductase family.

Its subcellular location is the cytoplasm. It carries out the reaction L-proline + NADP(+) = (S)-1-pyrroline-5-carboxylate + NADPH + 2 H(+). The catalysed reaction is L-proline + NAD(+) = (S)-1-pyrroline-5-carboxylate + NADH + 2 H(+). It participates in amino-acid biosynthesis; L-proline biosynthesis; L-proline from L-glutamate 5-semialdehyde: step 1/1. Functionally, catalyzes the reduction of 1-pyrroline-5-carboxylate (PCA) to L-proline. This chain is Pyrroline-5-carboxylate reductase, found in Mycobacterium tuberculosis (strain CDC 1551 / Oshkosh).